The sequence spans 237 residues: Uridylate kinase (237 aa).

Residue 11-14 (KLSG) coordinates ATP. Glycine 53 contacts UMP. Positions 54 and 58 each coordinate ATP. Residues aspartate 73 and 134-141 (TGNPFFTT) each bind UMP. Residues threonine 161, tyrosine 167, and aspartate 170 each contribute to the ATP site.

It belongs to the UMP kinase family. In terms of assembly, homohexamer.

It localises to the cytoplasm. It carries out the reaction UMP + ATP = UDP + ADP. The protein operates within pyrimidine metabolism; CTP biosynthesis via de novo pathway; UDP from UMP (UMPK route): step 1/1. With respect to regulation, inhibited by UTP. In terms of biological role, catalyzes the reversible phosphorylation of UMP to UDP. The chain is Uridylate kinase from Paraburkholderia xenovorans (strain LB400).